A 176-amino-acid chain; its full sequence is Ribosome maturation factor RimM (176 aa).

Residues 97-176 (EDEFYWRDLI…QILVDWDPDF (80 aa)) form the PRC barrel domain.

Belongs to the RimM family. Binds ribosomal protein uS19.

It is found in the cytoplasm. In terms of biological role, an accessory protein needed during the final step in the assembly of 30S ribosomal subunit, possibly for assembly of the head region. Essential for efficient processing of 16S rRNA. May be needed both before and after RbfA during the maturation of 16S rRNA. It has affinity for free ribosomal 30S subunits but not for 70S ribosomes. The protein is Ribosome maturation factor RimM of Shewanella putrefaciens (strain CN-32 / ATCC BAA-453).